The primary structure comprises 423 residues: Hydroxymethylglutaryl-CoA synthase-like protein AKT4-1 (423 aa).

The protein belongs to the thiolase-like superfamily. HMG-CoA synthase family.

It functions in the pathway mycotoxin biosynthesis. Its function is as follows. Hydroxymethylglutaryl-CoA synthase-like protein; part of the gene clusters that mediate the biosynthesis of the host-selective toxins (HSTs) AK-toxins responsible for Japanese pear black spot disease by the Japanese pear pathotype. AK-toxins are esters of 9,10-epoxy 8-hydroxy 9-methyldecatrienoic acid (EDA). On cellular level, AK-toxins affect plasma membrane of susceptible cells and cause a sudden increase in loss of K(+) after a few minutes of toxin treatment. The acyl-CoA ligase AKT1, the hydrolase AKT2 and enoyl-CoA hydratase AKT3 are all involved in the biosynthesis of the AK-, AF- and ACT-toxin common 9,10-epoxy-8-hydroxy-9-methyl-decatrienoic acid (EDA) structural moiety. Part of the EDA biosynthesis occurs in the peroxisome since these 3 enzymes are localized in peroxisomes. The exact roles of the 3 enzymes, as well as of additional AK-toxin clusters enzymes, including AKT4, AKT6 and AKTS1, have still to be elucidated. The Cytochrome P450 monooxygenase AKT7 on the other side functions to limit production of EDA and AK-toxin, probably via the catalysis of a side reaction of EDA or its precursor. The sequence is that of Hydroxymethylglutaryl-CoA synthase-like protein AKT4-1 from Alternaria alternata (Alternaria rot fungus).